The chain runs to 495 residues: Potassium voltage-gated channel subfamily A member 1 (495 aa).

The interval 1 to 30 is disordered; that stretch reads MTVMSGENADEASAAPGHPQDGSYPRQADH. The tract at residues 1–128 is tetramerization domain; that stretch reads MTVMSGENAD…FYELGEEAME (128 aa). The Cytoplasmic portion of the chain corresponds to 1-164; the sequence is MTVMSGENAD…LLFEYPESSG (164 aa). Serine 23 carries the phosphoserine modification. The helical transmembrane segment at 165–186 threads the bilayer; it reads PARVIAIVSVMVILISIVIFCL. The Extracellular portion of the chain corresponds to 187–220; it reads ETLPELKDDKDFTGTIHRIDNTTVIYTSNIFTDP. Residue asparagine 207 is glycosylated (N-linked (GlcNAc...) asparagine). A helical transmembrane segment spans residues 221-242; that stretch reads FFIVETLCIIWFSFELVVRFFA. Cysteine 243 is lipidated: S-palmitoyl cysteine. Topologically, residues 243-253 are cytoplasmic; that stretch reads CPSKTDFFKNI. A helical membrane pass occupies residues 254–274; it reads MNFIDIVAIIPYFITLGTEIA. Residues 275–287 are Extracellular-facing; it reads EQEGNQKGEQATS. Residues 288-308 form a helical; Voltage-sensor membrane-spanning segment; it reads LAILRVIRLVRVFRIFKLSRH. The Cytoplasmic portion of the chain corresponds to 309–323; that stretch reads SKGLQILGQTLKASM. An S4-S5 linker region spans residues 310-323; sequence KGLQILGQTLKASM. Serine 322 is modified (phosphoserine; by PKA). The helical transmembrane segment at 324–345 threads the bilayer; that stretch reads RELGLLIFFLFIGVILFSSAVY. Residues 346–359 lie on the Extracellular side of the membrane; sequence FAEAEEAESHFSSI. An intramembrane region (helical) is located at residues 360 to 371; it reads PDAFWWAVVSMT. The short motif at 372 to 377 is the Selectivity filter element; sequence TVGYGD. Residues 372 to 379 lie within the membrane without spanning it; sequence TVGYGDMY. Topologically, residues 380-386 are extracellular; it reads PVTIGGK. Residues 387-415 traverse the membrane as a helical segment; the sequence is IVGSLCAIAGVLTIALPVPVIVSNFNYFY. The Cytoplasmic portion of the chain corresponds to 416 to 495; sequence HRETEGEEQA…VNKSKLLTDV (80 aa). Serine 437 and serine 439 each carry phosphoserine. Serine 446 carries the post-translational modification Phosphoserine; by PKA. A PDZ-binding motif is present at residues 493 to 495; it reads TDV.

The protein belongs to the potassium channel family. A (Shaker) (TC 1.A.1.2) subfamily. Kv1.1/KCNA1 sub-subfamily. In terms of assembly, homotetramer and heterotetramer with other channel-forming alpha subunits, such as KCNA2, KCNA4, KCNA5, KCNA6 and KCNA7. Channel activity is regulated by interaction with the beta subunits KCNAB1 and KCNAB2. Identified in a complex with KCNA2 and KCNAB2. Interacts (via C-terminus) with the PDZ domains of DLG1, DLG2 and DLG4. Interacts with LGI1 within a complex containing LGI1, KCNA4 and KCNAB1. Interacts (via cytoplasmic N-terminal domain) with KCNRG; this inhibits channel activity. Interacts with ANK3; this inhibits channel activity. Interacts (via N-terminus) with STX1A; this promotes channel inactivation. Interacts (via N-terminus) with the heterodimer formed by GNB1 and GNG2; this promotes channel inactivation. Can interact simultaneously with STX1A and the heterodimer formed by GNB1 and GNG2. Interacts with ADAM11. Post-translationally, palmitoylated on Cys-243; which may be required for membrane targeting. N-glycosylated. In terms of processing, phosphorylated on tyrosine residues. Phosphorylation increases in response to NRG1; this inhibits channel activity. Phosphorylated by PKA. Phosphorylation at Ser-446 regulates channel activity by down-regulating expression at the cell membrane. As to expression, detected in hippocampus, in the middle third of the molecular layer of the dentate gyrus and in stratum radiatum and stratum oriens. Detected in the mossy fiber zone in the hippocampus CA3 region, at or near axon terminals. Detected in brain cortex, at basket cell terminals. Detected adjacent to nodes of Ranvier in juxtaparanodal zones in spinal cord nerve fibers, but also in paranodal regions in some myelinated spinal cord axons. Detected in juxtaparanodal regions adjacent to the nodes of Ranvier in myelinated axons in cerebellar white matter. Detected in sensory neurons. Detected in neurons from the medial nucleus of the trapezoid body. Detected in basolateral amygdala. Detected in the paraventricular nucleus of the hypothalamus. Detected in the islet of Langerhans (at protein level).

The protein resides in the cell membrane. Its subcellular location is the membrane. It localises to the cell projection. The protein localises to the axon. It is found in the cytoplasmic vesicle. The protein resides in the perikaryon. Its subcellular location is the endoplasmic reticulum. It localises to the dendrite. The protein localises to the cell junction. It is found in the synapse. The protein resides in the presynapse. Its subcellular location is the presynaptic cell membrane. It carries out the reaction K(+)(in) = K(+)(out). With respect to regulation, inhibited by 4-aminopyridine (4-AP) and by tetraethylammonium (TEA). Inhibited by kaliotoxin (KTX). Functionally, voltage-gated potassium channel that mediates transmembrane potassium transport in excitable membranes, primarily in the brain and the central nervous system, but also in the kidney. Contributes to the regulation of the membrane potential and nerve signaling, and prevents neuronal hyperexcitability. Forms tetrameric potassium-selective channels through which potassium ions pass in accordance with their electrochemical gradient. The channel alternates between opened and closed conformations in response to the voltage difference across the membrane. Can form functional homotetrameric channels and heterotetrameric channels that contain variable proportions of KCNA1, KCNA2, KCNA4, KCNA5, KCNA6, KCNA7, and possibly other family members as well; channel properties depend on the type of alpha subunits that are part of the channel. Channel properties are modulated by cytoplasmic beta subunits that regulate the subcellular location of the alpha subunits and promote rapid inactivation of delayed rectifier potassium channels. In vivo, membranes probably contain a mixture of heteromeric potassium channel complexes, making it difficult to assign currents observed in intact tissues to any particular potassium channel family member. Homotetrameric KCNA1 forms a delayed-rectifier potassium channel that opens in response to membrane depolarization, followed by slow spontaneous channel closure. In contrast, a heterotetrameric channel formed by KCNA1 and KCNA4 shows rapid inactivation. Regulates neuronal excitability in hippocampus, especially in mossy fibers and medial perforant path axons, preventing neuronal hyperexcitability. Response to toxins that are selective for KCNA1, respectively for KCNA2, suggests that heteromeric potassium channels composed of both KCNA1 and KCNA2 play a role in pacemaking and regulate the output of deep cerebellar nuclear neurons. May function as down-stream effector for G protein-coupled receptors and inhibit GABAergic inputs to basolateral amygdala neurons. May contribute to the regulation of neurotransmitter release, such as gamma-aminobutyric acid (GABA) release. Plays a role in regulating the generation of action potentials and preventing hyperexcitability in myelinated axons of the vagus nerve, and thereby contributes to the regulation of heart contraction. Required for normal neuromuscular responses. Regulates the frequency of neuronal action potential firing in response to mechanical stimuli, and plays a role in the perception of pain caused by mechanical stimuli, but does not play a role in the perception of pain due to heat stimuli. Required for normal responses to auditory stimuli and precise location of sound sources, but not for sound perception. The use of toxins that block specific channels suggest that it contributes to the regulation of the axonal release of the neurotransmitter dopamine. Required for normal postnatal brain development and normal proliferation of neuronal precursor cells in the brain. Plays a role in the reabsorption of Mg(2+) in the distal convoluted tubules in the kidney and in magnesium ion homeostasis, probably via its effect on the membrane potential. In Rattus norvegicus (Rat), this protein is Potassium voltage-gated channel subfamily A member 1.